A 373-amino-acid chain; its full sequence is tRNA-specific 2-thiouridylase MnmA (373 aa).

Residues 12-19 (GMSGGVDS) and methionine 38 contribute to the ATP site. Residues 98-100 (NPD) form an interaction with target base in tRNA region. Cysteine 103 serves as the catalytic Nucleophile. Cysteines 103 and 200 form a disulfide. Residue glycine 128 participates in ATP binding. The segment at 150 to 152 (KDQ) is interaction with tRNA. Cysteine 200 serves as the catalytic Cysteine persulfide intermediate. The tract at residues 312–313 (RY) is interaction with tRNA.

Belongs to the MnmA/TRMU family. As to quaternary structure, interacts with TusE.

The protein localises to the cytoplasm. The catalysed reaction is S-sulfanyl-L-cysteinyl-[protein] + uridine(34) in tRNA + AH2 + ATP = 2-thiouridine(34) in tRNA + L-cysteinyl-[protein] + A + AMP + diphosphate + H(+). Catalyzes the 2-thiolation of uridine at the wobble position (U34) of tRNA(Lys), tRNA(Glu) and tRNA(Gln), leading to the formation of s(2)U34, the first step of tRNA-mnm(5)s(2)U34 synthesis. Sulfur is provided by IscS, via a sulfur-relay system. Binds ATP and its substrate tRNAs. In Yersinia enterocolitica serotype O:8 / biotype 1B (strain NCTC 13174 / 8081), this protein is tRNA-specific 2-thiouridylase MnmA.